A 340-amino-acid polypeptide reads, in one-letter code: Ketol-acid reductoisomerase (NADP(+)) (340 aa).

Residues 3–183 (INVYYDKDCD…GGGRTGIIET (181 aa)) enclose the KARI N-terminal Rossmann domain. NADP(+) contacts are provided by residues 26-29 (FGSQ), Ser54, and 84-87 (DELQ). His109 is an active-site residue. Gly135 is an NADP(+) binding site. In terms of domain architecture, KARI C-terminal knotted spans 184-329 (TFKDETETDL…KKLRAMMPWI (146 aa)). Mg(2+)-binding residues include Asp192, Glu196, Glu228, and Glu232. Ser253 is a binding site for substrate.

This sequence belongs to the ketol-acid reductoisomerase family. Mg(2+) is required as a cofactor.

The catalysed reaction is (2R)-2,3-dihydroxy-3-methylbutanoate + NADP(+) = (2S)-2-acetolactate + NADPH + H(+). It carries out the reaction (2R,3R)-2,3-dihydroxy-3-methylpentanoate + NADP(+) = (S)-2-ethyl-2-hydroxy-3-oxobutanoate + NADPH + H(+). It participates in amino-acid biosynthesis; L-isoleucine biosynthesis; L-isoleucine from 2-oxobutanoate: step 2/4. Its pathway is amino-acid biosynthesis; L-valine biosynthesis; L-valine from pyruvate: step 2/4. Involved in the biosynthesis of branched-chain amino acids (BCAA). Catalyzes an alkyl-migration followed by a ketol-acid reduction of (S)-2-acetolactate (S2AL) to yield (R)-2,3-dihydroxy-isovalerate. In the isomerase reaction, S2AL is rearranged via a Mg-dependent methyl migration to produce 3-hydroxy-3-methyl-2-ketobutyrate (HMKB). In the reductase reaction, this 2-ketoacid undergoes a metal-dependent reduction by NADPH to yield (R)-2,3-dihydroxy-isovalerate. The polypeptide is Ketol-acid reductoisomerase (NADP(+)) (Campylobacter concisus (strain 13826)).